The primary structure comprises 284 residues: TnP I resolvase (284 aa).

One can recognise a Core-binding (CB) domain in the interval 1 to 84 (MDVAKQFSSY…SLAKFNEFLI (84 aa)). In terms of domain architecture, Tyr recombinase spans 107 to 282 (ASPTQIVELD…NQLQLKNKME (176 aa)). Active-site residues include R145, K170, H234, R237, and H260. The active-site O-(3'-phospho-DNA)-tyrosine intermediate is the Y269.

Belongs to the 'phage' integrase family.

Functionally, resolvase catalyzes the resolution (a site-specific recombination) of the cointegrated replicon to yield the final transposition products. In Bacillus thuringiensis, this protein is TnP I resolvase (tnpI).